A 95-amino-acid chain; its full sequence is MDKRHILMLLAVIIISVAPLIIYSGHGEDDGYFGGADDSAGDAITETGYKPWFQPLWEPPSGEIESLLFALQAAIGALIIGYVFGYYRGRGESSE.

2 consecutive transmembrane segments (helical) span residues 5–25 and 67–87; these read HILMLLAVIIISVAPLIIYSG and LLFALQAAIGALIIGYVFGYY.

The protein belongs to the CbiN family. Forms an energy-coupling factor (ECF) transporter complex composed of an ATP-binding protein (A component, CbiO), a transmembrane protein (T component, CbiQ) and 2 possible substrate-capture proteins (S components, CbiM and CbiN) of unknown stoichimetry.

Its subcellular location is the cell membrane. Its pathway is cofactor biosynthesis; adenosylcobalamin biosynthesis. In terms of biological role, part of the energy-coupling factor (ECF) transporter complex CbiMNOQ involved in cobalt import. The protein is Cobalt transport protein CbiN of Methanothermobacter thermautotrophicus (strain ATCC 29096 / DSM 1053 / JCM 10044 / NBRC 100330 / Delta H) (Methanobacterium thermoautotrophicum).